The chain runs to 572 residues: MFS-type transporter pydD (572 aa).

The segment covering 1 to 15 (MLQEDKSSETMHDPS) has biased composition (basic and acidic residues). Positions 1 to 46 (MLQEDKSSETMHDPSTRGVETRNVTAVDSPLETATTSESPETERTN) are disordered. Residue asparagine 23 is glycosylated (N-linked (GlcNAc...) asparagine). The segment covering 29 to 39 (SPLETATTSES) has biased composition (low complexity). 8 helical membrane-spanning segments follow: residues 56–76 (FWAL…EGTI), 88–108 (LGGG…MTAM), 123–143 (WPML…GGAT), 156–176 (GIGA…VVPL), 185–205 (IVMG…GLIV), 212–232 (WTFY…FSFL), 255–275 (ALFV…GSVY), and 282–302 (VLVP…FEGS). The N-linked (GlcNAc...) asparagine glycan is linked to asparagine 317. The next 6 helical transmembrane spans lie at 321–341 (VGVM…LYFM), 358–378 (VQIL…GFLM), 386–406 (PIHY…SLLD), 419–439 (IVYS…LLAP), 451–471 (TWSF…AAVF), and 529–549 (WLVS…AREV).

Belongs to the major facilitator superfamily.

Its subcellular location is the membrane. Its function is as follows. MFS-type transporter; part of the gene cluster that mediates the biosynthesis of pyrrocidines, fungal natural products containing a macrocyclic para-cyclophane connected to a decahydrofluorene ring system that show potent antibiotic activities toward Gram-negative bacteria. The polypeptide is MFS-type transporter pydD (Acremonium sp).